The chain runs to 282 residues: Probable methylxanthine N7-demethylase NdmC (282 aa).

It carries out the reaction 7-methylxanthine + NADPH + O2 + H(+) = xanthine + formaldehyde + NADP(+) + H2O. The catalysed reaction is 7-methylxanthine + NADH + O2 + H(+) = xanthine + formaldehyde + NAD(+) + H2O. In terms of biological role, involved in the caffeine degradation, which is the essential first step for assimilating the carbon and nitrogen in caffeine. Probably catalyzes the N7-demethylation of 7-methylxanthine to produce xanthine and formaldehyde. This is Probable methylxanthine N7-demethylase NdmC from Pseudomonas sp. (strain TJI-51).